Reading from the N-terminus, the 692-residue chain is MASVGSRLTRFYISRPGVIARRFLAHAGMDDMGVSLSRSSLERLEFDNVALKKLPLDPSTEPGVRQVRGSCFSRVQPTPLKNPEFVAVSAPALALLGLDAEEVLKDPLGPEYLSGSKVMPGSEPAAHCYCGHQFGQFAGQLGDGAACYLGEVKAPAGQSPELLRENPTGRWEIQVKGAGLTPYSRQADGRKVLRSSIREFLCSEAVFALGVPTTRAGSVVTSDSRVMRDIFYDGNPRMERCSVVLRIAPSFIRFGSFEIFKRADEFTGRQGPSYGHDELRTQMLEYVIENFYPEIHRNYPDLTERNTAFFKEVTVRTARLVAQWQCVGFCHGVLNTDNMSILGLTLDYGPFGFMDRFDPDFICNASDNSGRYSYQAQPAICRWNLARLAEALEPDLPPDRAEQVLDEYLPLYNDFYLSNMRKKLGLLRKEEPEDEMLITELMQTMHNTGADFTNTFRSLSQISCPTQEEAEDESETIKQATELLLHQSASLEELKAANRPSMDPRELAMLVSMAQSNPALFQMISDRGTVSRQLERLSRLKELMDTTEEQLRVKHTEHWSDWIQKYRQRLARECESGVDVKDVQTERVRVMNNNNPHVVLRNYIAQNAIAAAENGDFSEVQRVLKVLEKPFSVQEGLEQPGWMGRGGAAIPGERDETEEEGSNSSGAGARGLVPYDSKPPVWANEICVTUSS.

A mitochondrion-targeting transit peptide spans 1 to 24 (MASVGSRLTRFYISRPGVIARRFL). ATP contacts are provided by G142, G144, K176, D188, G189, R246, and R253. D337 (proton acceptor) is an active-site residue. Mg(2+) is bound by residues N338 and D347. D347 lines the ATP pocket. The segment at 637-676 (LEQPGWMGRGGAAIPGERDETEEEGSNSSGAGARGLVPYD) is disordered. A non-standard amino acid (selenocysteine) is located at residue U690.

Belongs to the SELO family. It depends on Mg(2+) as a cofactor.

It is found in the mitochondrion. The enzyme catalyses L-tyrosyl-[protein] + ATP = O-(5'-adenylyl)-L-tyrosyl-[protein] + diphosphate. It catalyses the reaction L-threonyl-[protein] + ATP = 3-O-(5'-adenylyl)-L-threonyl-[protein] + diphosphate. It carries out the reaction L-seryl-[protein] + ATP = 3-O-(5'-adenylyl)-L-seryl-[protein] + diphosphate. Functionally, catalyzes the transfer of adenosine 5'-monophosphate (AMP) to Ser, Thr and Tyr residues of target proteins (AMPylation). May be a redox-active mitochondrial selenoprotein which interacts with a redox target protein. The sequence is that of Protein adenylyltransferase SelO-1, mitochondrial from Danio rerio (Zebrafish).